The sequence spans 283 residues: Elongation factor Ts (283 aa).

Residues 80-83 (TDFV) form an involved in Mg(2+) ion dislocation from EF-Tu region.

The protein belongs to the EF-Ts family.

The protein resides in the cytoplasm. Its function is as follows. Associates with the EF-Tu.GDP complex and induces the exchange of GDP to GTP. It remains bound to the aminoacyl-tRNA.EF-Tu.GTP complex up to the GTP hydrolysis stage on the ribosome. This Pectobacterium atrosepticum (strain SCRI 1043 / ATCC BAA-672) (Erwinia carotovora subsp. atroseptica) protein is Elongation factor Ts.